Here is a 408-residue protein sequence, read N- to C-terminus: Acetylornithine/succinyldiaminopimelate aminotransferase (408 aa).

Pyridoxal 5'-phosphate-binding positions include 108–109 (GA) and Phe-141. Arg-144 is a binding site for N(2)-acetyl-L-ornithine. Residue 226–229 (DEIQ) participates in pyridoxal 5'-phosphate binding. Lys-255 is modified (N6-(pyridoxal phosphate)lysine). Thr-283 lines the N(2)-acetyl-L-ornithine pocket. Thr-284 is a binding site for pyridoxal 5'-phosphate.

This sequence belongs to the class-III pyridoxal-phosphate-dependent aminotransferase family. ArgD subfamily. As to quaternary structure, homodimer. It depends on pyridoxal 5'-phosphate as a cofactor.

The protein localises to the cytoplasm. It carries out the reaction N(2)-acetyl-L-ornithine + 2-oxoglutarate = N-acetyl-L-glutamate 5-semialdehyde + L-glutamate. The catalysed reaction is N-succinyl-(2S,6S)-2,6-diaminopimelate + 2-oxoglutarate = (S)-2-succinylamino-6-oxoheptanedioate + L-glutamate. It functions in the pathway amino-acid biosynthesis; L-arginine biosynthesis; N(2)-acetyl-L-ornithine from L-glutamate: step 4/4. It participates in amino-acid biosynthesis; L-lysine biosynthesis via DAP pathway; LL-2,6-diaminopimelate from (S)-tetrahydrodipicolinate (succinylase route): step 2/3. Its function is as follows. Involved in both the arginine and lysine biosynthetic pathways. The chain is Acetylornithine/succinyldiaminopimelate aminotransferase from Buchnera aphidicola subsp. Acyrthosiphon pisum (strain APS) (Acyrthosiphon pisum symbiotic bacterium).